We begin with the raw amino-acid sequence, 435 residues long: Tol-Pal system protein TolB (435 aa).

A signal peptide spans 1–24 (MIPMPKMIRSLLLLFCLLPLGAQA).

Belongs to the TolB family. As to quaternary structure, the Tol-Pal system is composed of five core proteins: the inner membrane proteins TolA, TolQ and TolR, the periplasmic protein TolB and the outer membrane protein Pal. They form a network linking the inner and outer membranes and the peptidoglycan layer.

The protein resides in the periplasm. In terms of biological role, part of the Tol-Pal system, which plays a role in outer membrane invagination during cell division and is important for maintaining outer membrane integrity. This is Tol-Pal system protein TolB from Thioalkalivibrio sulfidiphilus (strain HL-EbGR7).